A 517-amino-acid polypeptide reads, in one-letter code: 2-isopropylmalate synthase (517 aa).

The region spanning 7–269 (VIIFDTTLRD…ETGIDTTQIV (263 aa)) is the Pyruvate carboxyltransferase domain. Mn(2+) is bound by residues D16, H204, H206, and N240. The required for the condensation reaction. Not required to bind substrate stretch occupies residues 366-517 (LADKKREIFD…KPKAQGSGTI (152 aa)). The segment at 395–517 (KFISQKISTE…KPKAQGSGTI (123 aa)) is regulatory domain.

Belongs to the alpha-IPM synthase/homocitrate synthase family. LeuA type 1 subfamily. As to quaternary structure, homodimer. Remains a homodimer in the presence of L-leucine. Requires Mn(2+) as cofactor.

Its subcellular location is the cytoplasm. The catalysed reaction is 3-methyl-2-oxobutanoate + acetyl-CoA + H2O = (2S)-2-isopropylmalate + CoA + H(+). Its pathway is amino-acid biosynthesis; L-leucine biosynthesis; L-leucine from 3-methyl-2-oxobutanoate: step 1/4. Its activity is regulated as follows. Inhibited by 3-bromo substituents and Leu, the pathway end product. Catalyzes the condensation of the acetyl group of acetyl-CoA with 3-methyl-2-oxobutanoate (2-ketoisovalerate) to form 3-carboxy-3-hydroxy-4-methylpentanoate (2-isopropylmalate). Complements an E.coli deletion. This is 2-isopropylmalate synthase from Neisseria meningitidis serogroup B (strain ATCC BAA-335 / MC58).